The following is a 497-amino-acid chain: Acetyl-coenzyme A carboxylase carboxyl transferase subunit beta, chloroplastic (497 aa).

In terms of domain architecture, CoA carboxyltransferase N-terminal spans 230–497; it reads LWIQCENCYG…FFPLNQNSIK (268 aa). Zn(2+)-binding residues include C234, C237, C253, and C256. The C4-type zinc finger occupies 234–256; sequence CENCYGLNYKKFFRSKMNICEQC.

Belongs to the AccD/PCCB family. Acetyl-CoA carboxylase is a heterohexamer composed of biotin carboxyl carrier protein, biotin carboxylase and 2 subunits each of ACCase subunit alpha and ACCase plastid-coded subunit beta (accD). It depends on Zn(2+) as a cofactor.

It is found in the plastid. It localises to the chloroplast stroma. It carries out the reaction N(6)-carboxybiotinyl-L-lysyl-[protein] + acetyl-CoA = N(6)-biotinyl-L-lysyl-[protein] + malonyl-CoA. The protein operates within lipid metabolism; malonyl-CoA biosynthesis; malonyl-CoA from acetyl-CoA: step 1/1. Functionally, component of the acetyl coenzyme A carboxylase (ACC) complex. Biotin carboxylase (BC) catalyzes the carboxylation of biotin on its carrier protein (BCCP) and then the CO(2) group is transferred by the transcarboxylase to acetyl-CoA to form malonyl-CoA. In Platanus occidentalis (Sycamore), this protein is Acetyl-coenzyme A carboxylase carboxyl transferase subunit beta, chloroplastic.